A 385-amino-acid polypeptide reads, in one-letter code: Single-stranded DNA-binding protein 4 (385 aa).

Met1 carries the post-translational modification N-acetylmethionine. Positions 17–49 (AREKLALYVYEYLLHIGAQKSAQTFLSEIRWEK) constitute a LisH domain. 2 disordered regions span residues 122–287 (FQGP…NSSE) and 331–363 (GSGDMDGLPKSSPGAVAGLSNAPGTPRDDGEMA). The segment covering 245 to 263 (SPSGNSIPYSSSSPGSYTG) has biased composition (low complexity). Residues 267-277 (GGGPPGTPIMP) show a composition bias toward pro residues. Ser341 is modified (phosphoserine). Position 355 is a phosphothreonine (Thr355).

It localises to the nucleus. This is Single-stranded DNA-binding protein 4 (SSBP4) from Homo sapiens (Human).